An 845-amino-acid polypeptide reads, in one-letter code: Translation initiation factor IF-2 (845 aa).

Disordered stretches follow at residues Arg-45 to Ser-91 and Glu-127 to Val-209. Polar residues predominate over residues Ser-81–Ser-91. Residues Thr-137–Asn-149 are compositionally biased toward basic and acidic residues. The segment covering Pro-151–Ser-162 has biased composition (polar residues). Positions Thr-179–His-193 are enriched in basic and acidic residues. A tr-type G domain is found at Pro-343–Lys-512. The G1 stretch occupies residues Gly-352–Thr-359. GTP is bound at residue Gly-352–Thr-359. A G2 region spans residues Gly-377–His-381. A G3 region spans residues Asp-398 to Gly-401. GTP is bound by residues Asp-398–His-402 and Asn-452–Asp-455. Residues Asn-452–Asp-455 are G4. The tract at residues Ser-488–Lys-490 is G5.

It belongs to the TRAFAC class translation factor GTPase superfamily. Classic translation factor GTPase family. IF-2 subfamily.

It is found in the cytoplasm. Functionally, one of the essential components for the initiation of protein synthesis. Protects formylmethionyl-tRNA from spontaneous hydrolysis and promotes its binding to the 30S ribosomal subunits. Also involved in the hydrolysis of GTP during the formation of the 70S ribosomal complex. This chain is Translation initiation factor IF-2, found in Bartonella quintana (strain Toulouse) (Rochalimaea quintana).